Consider the following 111-residue polypeptide: Ribonuclease P protein component (111 aa).

Belongs to the RnpA family. In terms of assembly, consists of a catalytic RNA component (M1 or rnpB) and a protein subunit.

The enzyme catalyses Endonucleolytic cleavage of RNA, removing 5'-extranucleotides from tRNA precursor.. RNaseP catalyzes the removal of the 5'-leader sequence from pre-tRNA to produce the mature 5'-terminus. It can also cleave other RNA substrates such as 4.5S RNA. The protein component plays an auxiliary but essential role in vivo by binding to the 5'-leader sequence and broadening the substrate specificity of the ribozyme. This is Ribonuclease P protein component from Borrelia garinii subsp. bavariensis (strain ATCC BAA-2496 / DSM 23469 / PBi) (Borreliella bavariensis).